The chain runs to 588 residues: Neopullulanase (588 aa).

Ca(2+)-binding residues include Asn147, Asn149, Ser153, Gly172, and Asp174. The substrate site is built by His247 and Arg326. Catalysis depends on Asp328, which acts as the Nucleophile. Residue Glu357 is the Proton donor of the active site. Substrate-binding positions include 423–424 (HD), Asp468, and Arg472.

It belongs to the glycosyl hydrolase 13 family. Homodimer. Requires Ca(2+) as cofactor.

The enzyme catalyses Hydrolysis of pullulan to panose (6-alpha-D-glucosylmaltose).. In terms of biological role, hydrolyzes pullulan efficiently but only a small amount of starch. Endohydrolysis of 1,4-alpha-glucosidic linkages in pullulan to form panose. Also cleaves (1-6)-alpha-glucosidic linkages to form maltotriose. The chain is Neopullulanase (nplT) from Geobacillus stearothermophilus (Bacillus stearothermophilus).